The following is a 191-amino-acid chain: Large ribosomal subunit protein uL6A (191 aa).

It belongs to the universal ribosomal protein uL6 family. In terms of assembly, component of the large ribosomal subunit (LSU). Mature yeast ribosomes consist of a small (40S) and a large (60S) subunit. The 40S small subunit contains 1 molecule of ribosomal RNA (18S rRNA) and 33 different proteins (encoded by 57 genes). The large 60S subunit contains 3 rRNA molecules (25S, 5.8S and 5S rRNA) and 46 different proteins (encoded by 81 genes). uL6 lines the binding pocket for eukaryotic elongation factor 2 (eEF2).

It is found in the cytoplasm. Its function is as follows. Component of the ribosome, a large ribonucleoprotein complex responsible for the synthesis of proteins in the cell. The small ribosomal subunit (SSU) binds messenger RNAs (mRNAs) and translates the encoded message by selecting cognate aminoacyl-transfer RNA (tRNA) molecules. The large subunit (LSU) contains the ribosomal catalytic site termed the peptidyl transferase center (PTC), which catalyzes the formation of peptide bonds, thereby polymerizing the amino acids delivered by tRNAs into a polypeptide chain. The nascent polypeptides leave the ribosome through a tunnel in the LSU and interact with protein factors that function in enzymatic processing, targeting, and the membrane insertion of nascent chains at the exit of the ribosomal tunnel. The protein is Large ribosomal subunit protein uL6A of Saccharomyces cerevisiae (strain ATCC 204508 / S288c) (Baker's yeast).